The chain runs to 202 residues: Urease accessory protein UreF (202 aa).

It belongs to the UreF family. In terms of assembly, ureD, UreF and UreG form a complex that acts as a GTP-hydrolysis-dependent molecular chaperone, activating the urease apoprotein by helping to assemble the nickel containing metallocenter of UreC. The UreE protein probably delivers the nickel.

It is found in the cytoplasm. Functionally, required for maturation of urease via the functional incorporation of the urease nickel metallocenter. The polypeptide is Urease accessory protein UreF (Sporosarcina pasteurii (Bacillus pasteurii)).